The following is a 695-amino-acid chain: D-(-)-3-hydroxybutyrate oligomer hydrolase (695 aa).

Positions 1 to 17 (MTTHGWGTRILLGAALA) are cleaved as a signal peptide. Ser308 serves as the catalytic Charge relay system.

Belongs to the D-(-)-3-hydroxybutyrate oligomer hydrolase family.

It localises to the secreted. It catalyses the reaction (3R)-hydroxybutanoate dimer + H2O = 2 (R)-3-hydroxybutanoate + H(+). It functions in the pathway lipid metabolism; butanoate metabolism. Its function is as follows. Participates in the degradation of poly-3-hydroxybutyrate (PHB). It works downstream of poly(3-hydroxybutyrate) depolymerase, hydrolyzing D(-)-3-hydroxybutyrate oligomers of various length (3HB-oligomers) into 3HB-monomers. This is D-(-)-3-hydroxybutyrate oligomer hydrolase from Burkholderia ambifaria (strain ATCC BAA-244 / DSM 16087 / CCUG 44356 / LMG 19182 / AMMD) (Burkholderia cepacia (strain AMMD)).